We begin with the raw amino-acid sequence, 561 residues long: Asparagine synthetase [glutamine-hydrolyzing] (561 aa).

Cys2 functions as the For GATase activity in the catalytic mechanism. A Glutamine amidotransferase type-2 domain is found at 2 to 191; it reads CGIWALFGSD…PGHYEVLDLK (190 aa). L-glutamine is bound by residues 49–53, 75–77, and Asp97; these read RLAVV and NGE. One can recognise an Asparagine synthetase domain in the interval 213–536; it reads HALYDGVEKL…PGRADWLPHY (324 aa). ATP contacts are provided by residues Leu256, Ile288, and 363 to 364; that span reads SG. Lys385 carries the post-translational modification N6-acetyllysine. The residue at position 545 (Thr545) is a Phosphothreonine.

The enzyme catalyses L-aspartate + L-glutamine + ATP + H2O = L-asparagine + L-glutamate + AMP + diphosphate + H(+). It participates in amino-acid biosynthesis; L-asparagine biosynthesis; L-asparagine from L-aspartate (L-Gln route): step 1/1. The polypeptide is Asparagine synthetase [glutamine-hydrolyzing] (ASNS) (Bos taurus (Bovine)).